A 325-amino-acid chain; its full sequence is NADH-quinone oxidoreductase subunit H (325 aa).

8 helical membrane-spanning segments follow: residues 11–31 (ILIS…CGAF), 81–101 (AIFT…FAIV), 114–134 (IGIL…LFAG), 154–174 (LSYE…AGSF), 186–206 (VWNV…GVAV), 237–257 (FFVG…TLFF), 265–285 (LPPF…FILI), and 304–324 (VCLP…LYNA).

It belongs to the complex I subunit 1 family. As to quaternary structure, NDH-1 is composed of 13 different subunits. Subunits NuoA, H, J, K, L, M, N constitute the membrane sector of the complex.

It is found in the cell inner membrane. It catalyses the reaction a quinone + NADH + 5 H(+)(in) = a quinol + NAD(+) + 4 H(+)(out). NDH-1 shuttles electrons from NADH, via FMN and iron-sulfur (Fe-S) centers, to quinones in the respiratory chain. The immediate electron acceptor for the enzyme in this species is believed to be ubiquinone. Couples the redox reaction to proton translocation (for every two electrons transferred, four hydrogen ions are translocated across the cytoplasmic membrane), and thus conserves the redox energy in a proton gradient. This subunit may bind ubiquinone. This chain is NADH-quinone oxidoreductase subunit H, found in Yersinia enterocolitica serotype O:8 / biotype 1B (strain NCTC 13174 / 8081).